Reading from the N-terminus, the 242-residue chain is Zinc import ATP-binding protein ZnuC (242 aa).

One can recognise an ABC transporter domain in the interval 24–241 (INVKDLSFAY…EKFLKMFSSY (218 aa)). Position 56 to 63 (56 to 63 (GPNGGGKT)) interacts with ATP.

This sequence belongs to the ABC transporter superfamily. Zinc importer (TC 3.A.1.15.5) family. In terms of assembly, the complex is composed of two ATP-binding proteins (ZnuC), two transmembrane proteins (ZnuB) and a solute-binding protein (ZnuA).

It localises to the cell inner membrane. It catalyses the reaction Zn(2+)(out) + ATP(in) + H2O(in) = Zn(2+)(in) + ADP(in) + phosphate(in) + H(+)(in). Functionally, part of the ABC transporter complex ZnuABC involved in zinc import. Responsible for energy coupling to the transport system. The chain is Zinc import ATP-binding protein ZnuC from Ehrlichia ruminantium (strain Gardel).